The following is an 85-amino-acid chain: MDISRAEQRILHILAQGGCIQVEKDEDGRIAEISCVTRDGWHLPGLDLALFRKVKRKGAIASTNGGPYRITRRGLQLVRSQTDNR.

Belongs to the UPF0386 family.

The protein is UPF0386 protein Meso_1721 of Chelativorans sp. (strain BNC1).